A 603-amino-acid polypeptide reads, in one-letter code: Nuclear receptor subfamily 2 group C member 1 (603 aa).

Residues M1–M178 are required for interaction with KAT2B. The segment at residues F110–C185 is a DNA-binding region (nuclear receptor). NR C4-type zinc fingers lie at residues C113–C133 and C149–C168. S197 and S215 each carry phosphoserine. T220 carries the post-translational modification Phosphothreonine. The residue at position 222 (T222) is a Phosphothreonine; by MAPK1. A Glycyl lysine isopeptide (Lys-Gly) (interchain with G-Cter in SUMO); alternate cross-link involves residue K250. K250 participates in a covalent cross-link: Glycyl lysine isopeptide (Lys-Gly) (interchain with G-Cter in SUMO2); alternate. The 243-residue stretch at G348–E590 folds into the NR LBD domain. S581 carries the post-translational modification Phosphoserine; by PKC. Residues P584–I603 are required for interaction with NRIP1. K588 is covalently cross-linked (Glycyl lysine isopeptide (Lys-Gly) (interchain with G-Cter in SUMO2)).

The protein belongs to the nuclear hormone receptor family. NR2 subfamily. Homodimer. Heterodimer; binds DNA as a heterodimer with NR2C2 required for chromatin remodeling and for binding to promoter regions such as globin DR1 repeats. Interacts with ESR1; the interaction prevents homodimerization of ESR1 and suppresses its transcriptional activity and cell growth. Interacts with NRIP1 (via its LXXLL motifs); the interaction provides corepressor activity. Interacts with HDAC3 (via the DNA-binding domain). Interacts with HDAC4 (via the DNA-binding domain). Interacts with PIAS1; the interaction is required for sumoylation of NR2C1. Interacts with UBE2I; the interaction is required for sumoylation of NR2C1. Interacts with KAT2B; the interaction acts as a corepressor of gene expression. Post-translationally, sumoylation requires both PIAS1 and UBE2I. Sumoylation appears to dissociate NR2C1 from the PML nuclear bodies. Enhances the interaction with NRIP1 but inhibits interaction with KAT2B. In proliferating cells, stimulation by all-trans retinoic acid, activation of MAPK1-mediated phosphorylation and recruitment to PML bodies with subsequent sumoylation, suppresses OCT4 expression. In terms of processing, phosphorylated on several serine and threonine residues. Phosphorylation on Thr-220, stimulated by all-trans retinoic acid (atRA) mediates PML location and sumoylation in proliferating cells which then modulates its association with effector molecules, KAT2B and NRIP1. Phosphorylation on Ser-581 by PKC is important for protein stability and function as activator of RARB.

It localises to the nucleus. The protein localises to the PML body. Functionally, orphan nuclear receptor. Binds the IR7 element in the promoter of its own gene in an autoregulatory negative feedback mechanism. Primarily repressor of a broad range of genes. Binds to hormone response elements (HREs) consisting of two 5'-AGGTCA-3' half site direct repeat consensus sequences. Together with NR2C2, forms the core of the DRED (direct repeat erythroid-definitive) complex that represses embryonic and fetal globin transcription. Also activator of OCT4 gene expression. May be involved in stem cell proliferation and differentiation. Mediator of retinoic acid-regulated preadipocyte proliferation. The polypeptide is Nuclear receptor subfamily 2 group C member 1 (NR2C1) (Macaca fascicularis (Crab-eating macaque)).